The sequence spans 256 residues: Thioredoxin-dependent peroxide reductase, mitochondrial (256 aa).

The N-terminal 61 residues, 1–61 (MAAAVGRLLR…KLFSTSSSCH (61 aa)), are a transit peptide targeting the mitochondrion. Residues 63–221 (PAVTQHAPYF…TLRLVKAFQY (159 aa)) enclose the Thioredoxin domain. Lys-83 bears the N6-succinyllysine mark. Lys-91 is subject to N6-acetyllysine; alternate. Lys-91 carries the post-translational modification N6-succinyllysine; alternate. The active-site Cysteine sulfenic acid (-SOH) intermediate is the Cys-108. Thr-146 carries the phosphothreonine modification.

Belongs to the peroxiredoxin family. AhpC/Prx1 subfamily. Homodimer; disulfide-linked, upon oxidation. 6 homodimers assemble to form a ring-like dodecamer. Interacts with NEK6. Interacts with LRRK2. Interacts with MAP3K13. Interacts with RPS6KC1 (via PX domain). Post-translationally, phosphorylated by LRRK2; phosphorylation reduces perodixase activity. The enzyme can be inactivated by further oxidation of the cysteine sulfenic acid (C(P)-SOH) to sulphinic acid (C(P)-SO2H) and sulphonic acid (C(P)-SO3H) instead of its condensation to a disulfide bond. In terms of processing, S-palmitoylated.

It is found in the mitochondrion. The protein localises to the cytoplasm. It localises to the early endosome. The enzyme catalyses a hydroperoxide + [thioredoxin]-dithiol = an alcohol + [thioredoxin]-disulfide + H2O. Thiol-specific peroxidase that catalyzes the reduction of hydrogen peroxide and organic hydroperoxides to water and alcohols, respectively. Plays a role in cell protection against oxidative stress by detoxifying peroxides. Acts synergistically with MAP3K13 to regulate the activation of NF-kappa-B in the cytosol. Required for the maintenance of physical strength. The polypeptide is Thioredoxin-dependent peroxide reductase, mitochondrial (PRDX3) (Homo sapiens (Human)).